A 254-amino-acid polypeptide reads, in one-letter code: MVPGRVLMWGALALTTVMSACGGEDIAADHVASYGLNVYQSYGPRGYFTHEFDGDEQFYVDLEKKETVWRLPLFSEFTSFDPQGALRNIATLKHNLNIVTKRSNNTAAVNKVPEVTVFSKSPVILGQPNTLICHVDSIFPPVINITWLKNGHSVKGFSETSFLSKNDHSFLKISYLTFLPSDDDFYDCKVEHWGLDKPLLKHWEPEIPAPMSELTETVVCALGLIVGLVGIVVGTVFIIQGLRSGGPSRHQGSL.

An N-terminal signal peptide occupies residues 1-23 (MVPGRVLMWGALALTTVMSACGG). Positions 24-120 (EDIAADHVAS…KVPEVTVFSK (97 aa)) are alpha-1. Topologically, residues 24–216 (EDIAADHVAS…IPAPMSELTE (193 aa)) are extracellular. 2 N-linked (GlcNAc...) asparagine glycosylation sites follow: asparagine 104 and asparagine 144. Residues 113 to 204 (PEVTVFSKSP…LDKPLLKHWE (92 aa)) form the Ig-like C1-type domain. The segment at 121 to 203 (SPVILGQPNT…GLDKPLLKHW (83 aa)) is alpha-2. A disulfide bridge links cysteine 133 with cysteine 188. The interval 204 to 216 (EPEIPAPMSELTE) is connecting peptide. The chain crosses the membrane as a helical span at residues 217–239 (TVVCALGLIVGLVGIVVGTVFII). The Cytoplasmic portion of the chain corresponds to 240 to 254 (QGLRSGGPSRHQGSL).

Belongs to the MHC class II family.

Its subcellular location is the membrane. In Sus scrofa (Pig), this protein is SLA class II histocompatibility antigen, DQ haplotype C alpha chain.